The chain runs to 163 residues: MTDTIAPEATPEGAEAGQAGIRILAQFVRDFSFENPLAPDALRAGAAQPAIDMGVEMNARGRADGLFEVDLKLSARAEREGQAVFHVEVVYGGLFHIAGIAEEDLEPVLLIECPRFLFPYARRLISDVTAEGGFPPFLIDPIDFAGVYAARKAQAEGQQVGNA.

This sequence belongs to the SecB family. Homotetramer, a dimer of dimers. One homotetramer interacts with 1 SecA dimer.

Its subcellular location is the cytoplasm. Its function is as follows. One of the proteins required for the normal export of preproteins out of the cell cytoplasm. It is a molecular chaperone that binds to a subset of precursor proteins, maintaining them in a translocation-competent state. It also specifically binds to its receptor SecA. The chain is Protein-export protein SecB from Caulobacter vibrioides (strain ATCC 19089 / CIP 103742 / CB 15) (Caulobacter crescentus).